A 126-amino-acid polypeptide reads, in one-letter code: Holo-[acyl-carrier-protein] synthase (126 aa).

2 residues coordinate Mg(2+): Asp9 and Glu57.

The protein belongs to the P-Pant transferase superfamily. AcpS family. The cofactor is Mg(2+).

It localises to the cytoplasm. The enzyme catalyses apo-[ACP] + CoA = holo-[ACP] + adenosine 3',5'-bisphosphate + H(+). Functionally, transfers the 4'-phosphopantetheine moiety from coenzyme A to a Ser of acyl-carrier-protein. This is Holo-[acyl-carrier-protein] synthase from Idiomarina loihiensis (strain ATCC BAA-735 / DSM 15497 / L2-TR).